The following is a 407-amino-acid chain: Probable tRNA sulfurtransferase (407 aa).

The THUMP domain maps to 61–165 (NEIIQRLSKV…MDAIYIYEKV (105 aa)). ATP-binding positions include 183 to 184 (ML), 208 to 209 (HF), Arg-265, Gly-287, and Gln-296.

This sequence belongs to the ThiI family.

Its subcellular location is the cytoplasm. It carries out the reaction [ThiI sulfur-carrier protein]-S-sulfanyl-L-cysteine + a uridine in tRNA + 2 reduced [2Fe-2S]-[ferredoxin] + ATP + H(+) = [ThiI sulfur-carrier protein]-L-cysteine + a 4-thiouridine in tRNA + 2 oxidized [2Fe-2S]-[ferredoxin] + AMP + diphosphate. The enzyme catalyses [ThiS sulfur-carrier protein]-C-terminal Gly-Gly-AMP + S-sulfanyl-L-cysteinyl-[cysteine desulfurase] + AH2 = [ThiS sulfur-carrier protein]-C-terminal-Gly-aminoethanethioate + L-cysteinyl-[cysteine desulfurase] + A + AMP + 2 H(+). The protein operates within cofactor biosynthesis; thiamine diphosphate biosynthesis. Functionally, catalyzes the ATP-dependent transfer of a sulfur to tRNA to produce 4-thiouridine in position 8 of tRNAs, which functions as a near-UV photosensor. Also catalyzes the transfer of sulfur to the sulfur carrier protein ThiS, forming ThiS-thiocarboxylate. This is a step in the synthesis of thiazole, in the thiamine biosynthesis pathway. The sulfur is donated as persulfide by IscS. The polypeptide is Probable tRNA sulfurtransferase (Staphylococcus epidermidis (strain ATCC 35984 / DSM 28319 / BCRC 17069 / CCUG 31568 / BM 3577 / RP62A)).